The primary structure comprises 200 residues: ATP synthase subunit s, mitochondrial (200 aa).

Residues 1–25 (MMMFGKISRQLCSLKKIPWSCDSRY) constitute a mitochondrion transit peptide. Residues 1–61 (MMMFGKISRQ…SEWLLRCGAK (61 aa)) form an N-terminal domain region. G59 provides a ligand contact to Mg(2+). LRR repeat units follow at residues 62–87 (VRYC…RYKI), 88–116 (QAID…KITL), 117–141 (CKCH…KSLL), and 142–173 (ELEI…LSDL). Residue T93 participates in Mg(2+) binding.

Belongs to the ATP synthase subunit s family. Homotetramer. Associates with ATP synthase.

The protein resides in the mitochondrion. It is found in the mitochondrion inner membrane. In terms of biological role, involved in regulation of mitochondrial membrane ATP synthase. Necessary for H(+) conduction of ATP synthase. Facilitates energy-driven catalysis of ATP synthesis by blocking a proton leak through an alternative proton exit pathway. This chain is ATP synthase subunit s, mitochondrial (Dmac2l), found in Mus musculus (Mouse).